The sequence spans 591 residues: Probable Xaa-Pro aminopeptidase PEPP (591 aa).

The segment at 31–59 (SIHSPPPSVSAATHGGVKNPSFSQRRTSG) is disordered. 2 residues coordinate Mn(2+): Asp322 and Asp333. Low complexity predominate over residues 441–450 (GLSRQAISGS). Residues 441 to 460 (GLSRQAISGSRRLPPPRNMK) are disordered. Mn(2+) contacts are provided by Glu511 and Glu552.

Belongs to the peptidase M24B family. Mn(2+) serves as cofactor.

The enzyme catalyses Release of any N-terminal amino acid, including proline, that is linked to proline, even from a dipeptide or tripeptide.. In terms of biological role, catalyzes the removal of a penultimate prolyl residue from the N-termini of peptides. In Sordaria macrospora (strain ATCC MYA-333 / DSM 997 / K(L3346) / K-hell), this protein is Probable Xaa-Pro aminopeptidase PEPP (PEPP).